The sequence spans 89 residues: DNA-directed RNA polymerase subunit omega (89 aa).

Belongs to the RNA polymerase subunit omega family. In terms of assembly, the RNAP catalytic core consists of 2 alpha, 1 beta, 1 beta' and 1 omega subunit. When a sigma factor is associated with the core the holoenzyme is formed, which can initiate transcription.

It catalyses the reaction RNA(n) + a ribonucleoside 5'-triphosphate = RNA(n+1) + diphosphate. In terms of biological role, promotes RNA polymerase assembly. Latches the N- and C-terminal regions of the beta' subunit thereby facilitating its interaction with the beta and alpha subunits. This chain is DNA-directed RNA polymerase subunit omega, found in Clavibacter michiganensis subsp. michiganensis (strain NCPPB 382).